The following is a 1132-amino-acid chain: Phycobiliprotein ApcE (1132 aa).

Cys196 is a binding site for (2R,3E)-phycocyanobilin. PBS-linker domains lie at 253–433 (DQQG…FRKV), 514–692 (LGPK…EKQE), 709–887 (PDID…KQNN), and 940–1121 (GRGQ…SSLS).

Belongs to the phycobilisome linker protein family. In terms of assembly, heterodimer of ApcF (a variant beta-allophycocyanin). Phycobilisomes of this organism are composed of a two cylinder core, from which six rods radiate. The core is mainly composed of allophycocyanin alpha and beta chains and of minor components. In terms of processing, contains one covalently linked bilin chromophore. This protein autochromophorylates.

The protein resides in the cellular thylakoid membrane. This protein is postulated to act both as terminal energy acceptor (by its phycobilin-like domains) and as a linker polypeptide (by its repeats and arms) that stabilizes the phycobilisome core architecture. Has intrinsic bilin lyase activity. In Nostoc sp. (strain PCC 7120 / SAG 25.82 / UTEX 2576), this protein is Phycobiliprotein ApcE (apcE).